Here is a 2552-residue protein sequence, read N- to C-terminus: Protein TIC 214 (2552 aa).

The next 6 helical transmembrane spans lie at 15–35 (LIFGIFYGILITFSKLTSYLF), 54–74 (LSYGFTVGHLLGYLLIYYLPF), 78–98 (LSNFYLKIILALGLMLYQFFW), 119–136 (TLAFVYGLSYRLLNYTFF), 154–174 (FKILFLYTTFFVWMIGHLICI), and 243–263 (ILATILFIVALYLLGKSPIPF). The tract at residues 304–325 (EEQKKDEKSADEEKKRAVEEEN) is disordered. A compositionally biased stretch (basic and acidic residues) spans 305-322 (EQKKDEKSADEEKKRAVE). Helical transmembrane passes span 362-382 (TLYTFFSDCFFESFSFYAFLF), 423-443 (PFLVVVKPFYLYFFNFFSVYI), and 452-472 (FLFNHNFVFSAIFRGFSHFFF). The disordered stretch occupies residues 2045 to 2077 (MKAEEQKKIDEEYEEKKEKRKKEQEEQGKAFDE). Positions 2416-2511 (RRRRQLRIVN…IKKKLMRLRF (96 aa)) form a coiled coil.

This sequence belongs to the TIC214 family. Part of the Tic complex.

It is found in the plastid. Its subcellular location is the chloroplast inner membrane. Involved in protein precursor import into chloroplasts. May be part of an intermediate translocation complex acting as a protein-conducting channel at the inner envelope. In Pelargonium hortorum (Common geranium), this protein is Protein TIC 214.